A 271-amino-acid chain; its full sequence is Probable WRKY transcription factor 69 (271 aa).

Disordered regions lie at residues 1–47 (MHRR…NVEK) and 130–166 (PSSS…TVTA). A compositionally biased stretch (acidic residues) spans 9 to 18 (ESDDEEDETY). The WRKY DNA-binding region spans 64-130 (GEVYPPSDSW…YACDHNHPFP (67 aa)).

This sequence belongs to the WRKY group II-e family.

It is found in the nucleus. Its function is as follows. Transcription factor. Interacts specifically with the W box (5'-(T)TGAC[CT]-3'), a frequently occurring elicitor-responsive cis-acting element. The protein is Probable WRKY transcription factor 69 (WRKY69) of Arabidopsis thaliana (Mouse-ear cress).